The sequence spans 131 residues: Small ribosomal subunit protein uS11 (131 aa).

Belongs to the universal ribosomal protein uS11 family. In terms of assembly, part of the 30S ribosomal subunit. Interacts with proteins S7 and S18. Binds to IF-3.

Located on the platform of the 30S subunit, it bridges several disparate RNA helices of the 16S rRNA. Forms part of the Shine-Dalgarno cleft in the 70S ribosome. The protein is Small ribosomal subunit protein uS11 of Deinococcus deserti (strain DSM 17065 / CIP 109153 / LMG 22923 / VCD115).